Reading from the N-terminus, the 567-residue chain is Malate synthase, glyoxysomal (567 aa).

Arg-182 serves as the catalytic Proton acceptor. Asp-468 acts as the Proton donor in catalysis. Residues 565 to 567 (SKL) carry the Microbody targeting signal motif.

Belongs to the malate synthase family.

It is found in the glyoxysome. The catalysed reaction is glyoxylate + acetyl-CoA + H2O = (S)-malate + CoA + H(+). It functions in the pathway carbohydrate metabolism; glyoxylate cycle; (S)-malate from isocitrate: step 2/2. The sequence is that of Malate synthase, glyoxysomal from Gossypium hirsutum (Upland cotton).